Consider the following 467-residue polypeptide: Bifunctional protein GlmU (467 aa).

The tract at residues 1-229 (MEKNTIILAA…FSESMGVNDR (229 aa)) is pyrophosphorylase. UDP-N-acetyl-alpha-D-glucosamine-binding positions include 8–11 (LAAG), lysine 22, glutamine 72, 77–78 (GT), 100–102 (SGD), glycine 139, glutamate 154, asparagine 169, and asparagine 227. A Mg(2+)-binding site is contributed by aspartate 102. Position 227 (asparagine 227) interacts with Mg(2+). Positions 230–250 (LALSKATKVMQRRINEEHMVN) are linker. The interval 251 to 467 (GVTIIDPENT…ALKAEEENNK (217 aa)) is N-acetyltransferase. 2 residues coordinate UDP-N-acetyl-alpha-D-glucosamine: arginine 332 and lysine 350. The active-site Proton acceptor is histidine 362. Positions 365 and 376 each coordinate UDP-N-acetyl-alpha-D-glucosamine. Acetyl-CoA contacts are provided by residues 385–386 (NY), serine 404, alanine 422, and arginine 439.

In the N-terminal section; belongs to the N-acetylglucosamine-1-phosphate uridyltransferase family. It in the C-terminal section; belongs to the transferase hexapeptide repeat family. Homotrimer. Requires Mg(2+) as cofactor.

The protein resides in the cytoplasm. It carries out the reaction alpha-D-glucosamine 1-phosphate + acetyl-CoA = N-acetyl-alpha-D-glucosamine 1-phosphate + CoA + H(+). The catalysed reaction is N-acetyl-alpha-D-glucosamine 1-phosphate + UTP + H(+) = UDP-N-acetyl-alpha-D-glucosamine + diphosphate. It participates in nucleotide-sugar biosynthesis; UDP-N-acetyl-alpha-D-glucosamine biosynthesis; N-acetyl-alpha-D-glucosamine 1-phosphate from alpha-D-glucosamine 6-phosphate (route II): step 2/2. It functions in the pathway nucleotide-sugar biosynthesis; UDP-N-acetyl-alpha-D-glucosamine biosynthesis; UDP-N-acetyl-alpha-D-glucosamine from N-acetyl-alpha-D-glucosamine 1-phosphate: step 1/1. Its pathway is bacterial outer membrane biogenesis; LPS lipid A biosynthesis. Functionally, catalyzes the last two sequential reactions in the de novo biosynthetic pathway for UDP-N-acetylglucosamine (UDP-GlcNAc). The C-terminal domain catalyzes the transfer of acetyl group from acetyl coenzyme A to glucosamine-1-phosphate (GlcN-1-P) to produce N-acetylglucosamine-1-phosphate (GlcNAc-1-P), which is converted into UDP-GlcNAc by the transfer of uridine 5-monophosphate (from uridine 5-triphosphate), a reaction catalyzed by the N-terminal domain. The sequence is that of Bifunctional protein GlmU from Pediococcus pentosaceus (strain ATCC 25745 / CCUG 21536 / LMG 10740 / 183-1w).